A 350-amino-acid polypeptide reads, in one-letter code: Biotin synthase (350 aa).

The Radical SAM core domain maps to 38-256; it reads NHVQVSTLLS…IAVARIMMPK (219 aa). Residues cysteine 53, cysteine 57, and cysteine 60 each contribute to the [4Fe-4S] cluster site. [2Fe-2S] cluster is bound by residues cysteine 97, cysteine 128, cysteine 188, and arginine 260.

This sequence belongs to the radical SAM superfamily. Biotin synthase family. As to quaternary structure, homodimer. [4Fe-4S] cluster serves as cofactor. It depends on [2Fe-2S] cluster as a cofactor.

The catalysed reaction is (4R,5S)-dethiobiotin + (sulfur carrier)-SH + 2 reduced [2Fe-2S]-[ferredoxin] + 2 S-adenosyl-L-methionine = (sulfur carrier)-H + biotin + 2 5'-deoxyadenosine + 2 L-methionine + 2 oxidized [2Fe-2S]-[ferredoxin]. It functions in the pathway cofactor biosynthesis; biotin biosynthesis; biotin from 7,8-diaminononanoate: step 2/2. Functionally, catalyzes the conversion of dethiobiotin (DTB) to biotin by the insertion of a sulfur atom into dethiobiotin via a radical-based mechanism. The protein is Biotin synthase of Vibrio cholerae serotype O1 (strain ATCC 39541 / Classical Ogawa 395 / O395).